A 122-amino-acid polypeptide reads, in one-letter code: Crustacean hyperglycemic hormones 7 (122 aa).

An N-terminal signal peptide occupies residues 1–26 (MSLAMTAFRMMAVALVVVVASSTTWA). Cystine bridges form between cysteine 55–cysteine 91, cysteine 71–cysteine 87, and cysteine 74–cysteine 100. A Valine amide modification is found at valine 120.

The protein belongs to the arthropod CHH/MIH/GIH/VIH hormone family. In terms of tissue distribution, produced by the medulla terminalis X-organ in the eyestalks and transported to the sinus gland where they are stored and released.

The protein resides in the secreted. Hormone found in the sinus gland of isopods and decapods which controls the blood sugar level. Has a secretagogue action over the amylase released from the midgut gland. May act as a stress hormone and may be involved in the control of molting and reproduction. The sequence is that of Crustacean hyperglycemic hormones 7 from Penaeus japonicus (Kuruma prawn).